Here is a 338-residue protein sequence, read N- to C-terminus: MAVKVGINGFGRIGRIVLRNAIIHGDIDVVAINDPFIDLEYMVYMFKYDSTHGVFKGSVEIKDGKLVIEGKPIVVYGERDPANIQWGAAGADYVVESTGVFTTQEKAELHLKGGAKKVVISAPSADAPMFVCGVNLDKYDPKYTVVSNASCTTNCLAPLGKVIHDNYTIVEGLMTTVHATTATQKTVDGPSNKDWRGGRGAGANIIPSSTGAAKAVGKVIPSLNGKLTGMAFRVPTPDVSVVDLVVRIEKGASYEEIKETIKKASQTPELKGILNYTDDQVVSTDFTGDSASSTFDAQGGISLNGNFVKLVSWYDNEWGYSARVCDLVSYIAAQDAKA.

NAD(+)-binding positions include 12–13 (RI), aspartate 34, and arginine 79. D-glyceraldehyde 3-phosphate is bound by residues 150–152 (SCT), threonine 181, 210–211 (TG), and arginine 233. Residue cysteine 151 is the Nucleophile of the active site. Residue asparagine 316 coordinates NAD(+).

Belongs to the glyceraldehyde-3-phosphate dehydrogenase family. In terms of assembly, homotetramer.

The protein resides in the cytoplasm. The catalysed reaction is D-glyceraldehyde 3-phosphate + phosphate + NAD(+) = (2R)-3-phospho-glyceroyl phosphate + NADH + H(+). It participates in carbohydrate degradation; glycolysis; pyruvate from D-glyceraldehyde 3-phosphate: step 1/5. The chain is Glyceraldehyde-3-phosphate dehydrogenase (GPD) from Phaffia rhodozyma (Yeast).